Here is a 541-residue protein sequence, read N- to C-terminus: Apolipoprotein N-acyltransferase (541 aa).

The next 6 helical transmembrane spans lie at 21–41 (MSWF…WYSL), 54–74 (LTSL…SWML), 89–109 (VLIS…FFIV), 116–136 (ILWC…YFLC), 157–177 (FGGF…GISF), and 189–209 (YVWL…YEYL). Positions 219–500 (LRVAVIQPAS…PGVLQVSLPM (282 aa)) constitute a CN hydrolase domain. The active-site Proton acceptor is the Glu-265. Lys-350 is an active-site residue. The active-site Nucleophile is Cys-405. A helical transmembrane segment spans residues 506–526 (LYAFWGDFPMIFLSLLSIGCI).

It belongs to the CN hydrolase family. Apolipoprotein N-acyltransferase subfamily.

The protein resides in the cell inner membrane. It carries out the reaction N-terminal S-1,2-diacyl-sn-glyceryl-L-cysteinyl-[lipoprotein] + a glycerophospholipid = N-acyl-S-1,2-diacyl-sn-glyceryl-L-cysteinyl-[lipoprotein] + a 2-acyl-sn-glycero-3-phospholipid + H(+). It functions in the pathway protein modification; lipoprotein biosynthesis (N-acyl transfer). Catalyzes the phospholipid dependent N-acylation of the N-terminal cysteine of apolipoprotein, the last step in lipoprotein maturation. The polypeptide is Apolipoprotein N-acyltransferase (Chlamydia caviae (strain ATCC VR-813 / DSM 19441 / 03DC25 / GPIC) (Chlamydophila caviae)).